A 246-amino-acid chain; its full sequence is Biosynthetic peptidoglycan transglycosylase (246 aa).

The helical transmembrane segment at 20–42 (WLRWLMAAPLLFAAASVLQVLIL) threads the bilayer.

Belongs to the glycosyltransferase 51 family.

Its subcellular location is the cell inner membrane. The enzyme catalyses [GlcNAc-(1-&gt;4)-Mur2Ac(oyl-L-Ala-gamma-D-Glu-L-Lys-D-Ala-D-Ala)](n)-di-trans,octa-cis-undecaprenyl diphosphate + beta-D-GlcNAc-(1-&gt;4)-Mur2Ac(oyl-L-Ala-gamma-D-Glu-L-Lys-D-Ala-D-Ala)-di-trans,octa-cis-undecaprenyl diphosphate = [GlcNAc-(1-&gt;4)-Mur2Ac(oyl-L-Ala-gamma-D-Glu-L-Lys-D-Ala-D-Ala)](n+1)-di-trans,octa-cis-undecaprenyl diphosphate + di-trans,octa-cis-undecaprenyl diphosphate + H(+). Its pathway is cell wall biogenesis; peptidoglycan biosynthesis. Functionally, peptidoglycan polymerase that catalyzes glycan chain elongation from lipid-linked precursors. The polypeptide is Biosynthetic peptidoglycan transglycosylase (Xanthomonas axonopodis pv. citri (strain 306)).